The chain runs to 1222 residues: Deubiquitinating protein VCPIP1 (1222 aa).

A compositionally biased stretch (pro residues) spans 1–21 (MSQPPPPPPPLPPPPPPPEAP). The interval 1–36 (MSQPPPPPPPLPPPPPPPEAPQTPSSLASAAASGGL) is disordered. Positions 25–36 (SSLASAAASGGL) are enriched in low complexity. Residues 208-361 (LIPVHVDGDG…RNHYIPLVGI (154 aa)) enclose the OTU domain. Asp-216 is an active-site residue. Residue Cys-219 is the Nucleophile of the active site. His-354 is a catalytic residue. The residue at position 408 (Lys-408) is an N6-acetyllysine. 3 disordered regions span residues 725–776 (SVMQ…KEKK), 989–1009 (EATT…LGSG), and 1024–1074 (AFQG…VFTA). Ser-747 and Ser-757 each carry phosphoserine. Residues 755 to 771 (PSSAPATPTKAPYSPTT) show a composition bias toward low complexity. Thr-763 is modified (phosphothreonine). 3 positions are modified to phosphoserine: Ser-768, Ser-994, and Ser-998. A compositionally biased stretch (basic and acidic residues) spans 1041-1050 (LDPRARETSV). Residues 1057 to 1074 (GTDFSNSSTKTEPSVFTA) are compositionally biased toward polar residues. Ser-1077 carries the post-translational modification Phosphoserine. Disordered regions lie at residues 1113–1175 (VSSI…TETT) and 1188–1222 (ATRS…MDHS). The span at 1143–1157 (VVSSSAKSGSLQTGL) shows a compositional bias: polar residues. A compositionally biased stretch (low complexity) spans 1163–1175 (LTGGTENLNTETT). The residue at position 1198 (Ser-1198) is a Phosphoserine. Residues 1200-1209 (EELEEMDSQD) are compositionally biased toward acidic residues. At Ser-1207 the chain carries Phosphoserine; by ATM. The segment covering 1210–1222 (AEMTNTTEPMDHS) has biased composition (polar residues).

In terms of assembly, binds VCP and the ternary complex containing STX5A, NSFL1C and VCP. Post-translationally, phosphorylated at Ser-1207 by ATM or ATR following induction of covalent DNA-protein cross-links (DPCs).

The protein resides in the nucleus. It localises to the cytoplasm. It is found in the endoplasmic reticulum. The protein localises to the golgi apparatus. Its subcellular location is the golgi stack. It carries out the reaction Thiol-dependent hydrolysis of ester, thioester, amide, peptide and isopeptide bonds formed by the C-terminal Gly of ubiquitin (a 76-residue protein attached to proteins as an intracellular targeting signal).. Functionally, deubiquitinating enzyme involved in DNA repair and reassembly of the Golgi apparatus and the endoplasmic reticulum following mitosis. Necessary for VCP-mediated reassembly of Golgi stacks after mitosis. Plays a role in VCP-mediated formation of transitional endoplasmic reticulum (tER). Mediates dissociation of the ternary complex containing STX5A, NSFL1C and VCP. Also involved in DNA repair following phosphorylation by ATM or ATR: acts by catalyzing deubiquitination of SPRTN, thereby promoting SPRTN recruitment to chromatin and subsequent proteolytic cleavage of covalent DNA-protein cross-links (DPCs). Hydrolyzes 'Lys-11'- and 'Lys-48'-linked polyubiquitin chains. (Microbial infection) Regulates the duration of C.botulinum neurotoxin type A (BoNT/A) intoxication by catalyzing deubiquitination of Botulinum neurotoxin A light chain (LC), thereby preventing LC degradation by the proteasome, and accelerating botulinum neurotoxin intoxication in patients. This Homo sapiens (Human) protein is Deubiquitinating protein VCPIP1.